A 464-amino-acid polypeptide reads, in one-letter code: Na(+)/H(+) antiporter NhaA (464 aa).

12 consecutive transmembrane segments (helical) span residues 37–57 (GSGI…NTSC), 82–102 (IHYW…GLEI), 118–138 (VLPI…YFSF), 145–165 (VSGW…ILLL), 176–196 (AVLV…IAIF), 200–220 (NLAW…LLLN), 226–246 (ALWA…FSGV), 248–268 (ATVA…YSPT), 321–341 (ILNT…NAGV), 360–380 (VFFG…MICV), 396–416 (VLGI…VSEL), and 430–450 (ITIL…LRFI).

It belongs to the NhaA Na(+)/H(+) (TC 2.A.33) antiporter family.

The protein localises to the cell inner membrane. The catalysed reaction is Na(+)(in) + 2 H(+)(out) = Na(+)(out) + 2 H(+)(in). Its function is as follows. Na(+)/H(+) antiporter that extrudes sodium in exchange for external protons. This is Na(+)/H(+) antiporter NhaA from Dichelobacter nodosus (strain VCS1703A).